The primary structure comprises 563 residues: Adenine deaminase (563 aa).

This sequence belongs to the metallo-dependent hydrolases superfamily. Adenine deaminase family. Mn(2+) serves as cofactor.

The catalysed reaction is adenine + H2O + H(+) = hypoxanthine + NH4(+). The sequence is that of Adenine deaminase from Brucella anthropi (strain ATCC 49188 / DSM 6882 / CCUG 24695 / JCM 21032 / LMG 3331 / NBRC 15819 / NCTC 12168 / Alc 37) (Ochrobactrum anthropi).